We begin with the raw amino-acid sequence, 541 residues long: Valine N-monooxygenase 2 (541 aa).

Residues 1-18 lie on the Cytoplasmic side of the membrane; it reads MAMNVSTTATTTASFAST. Residues 19–41 form a helical membrane-spanning segment; that stretch reads SSMNNTAKILLITLFISIVSTVI. Residues 42–541 are Lumenal-facing; sequence KLQKRASYKK…LAPHLYPTSP (500 aa). Asparagine 277 is a glycosylation site (N-linked (GlcNAc...) asparagine). Residue cysteine 477 participates in heme binding. Asparagine 505 carries N-linked (GlcNAc...) asparagine glycosylation.

This sequence belongs to the cytochrome P450 family. Heme serves as cofactor. Expressed in the epidermis, the next two cortex cell layers, the endodermis and the pericycle of leaf petioles. Strong expression around the laticifers among the phloem cells and in parenchymatic cells between the protoxylem and the metaxylem cells. In the leaves, preferentially expressed in the mesophyll cells adjacent to the epidermis.

Its subcellular location is the microsome membrane. It carries out the reaction L-valine + 2 reduced [NADPH--hemoprotein reductase] + 2 O2 = (E)-2-methylpropanal oxime + 2 oxidized [NADPH--hemoprotein reductase] + CO2 + 3 H2O + 2 H(+). The catalysed reaction is L-valine + reduced [NADPH--hemoprotein reductase] + O2 = N-hydroxy-L-valine + oxidized [NADPH--hemoprotein reductase] + H2O + 2 H(+). It catalyses the reaction N-hydroxy-L-valine + reduced [NADPH--hemoprotein reductase] + O2 = N,N-dihydroxy-L-valine + oxidized [NADPH--hemoprotein reductase] + H2O + H(+). The enzyme catalyses L-isoleucine + 2 reduced [NADPH--hemoprotein reductase] + 2 O2 = (1E,2S)-2-methylbutanal oxime + 2 oxidized [NADPH--hemoprotein reductase] + CO2 + 3 H2O + 2 H(+). It carries out the reaction L-isoleucine + reduced [NADPH--hemoprotein reductase] + O2 = N-hydroxy-L-isoleucine + oxidized [NADPH--hemoprotein reductase] + H2O + 2 H(+). The catalysed reaction is N-hydroxy-L-isoleucine + reduced [NADPH--hemoprotein reductase] + O2 = N,N-dihydroxy-L-isoleucine + oxidized [NADPH--hemoprotein reductase] + H2O + H(+). Involved in the biosynthesis of the cyanogenic glucosides linamarin and lotaustralin. Can use L-valine or L-isoleucine as substrate. Catalyzes multi-step reactions starting with two successive N-hydroxylations using L-valine and L-isoleucine as substrates leading to the formation of N,N-dihydroxy-L-valine and N,N-dihydroxy-L-isoleucine, respectively; following spontaneous reactions lead to the production of (E)-2-methylpropanal oxime and (1E,2S)-2-methylbutanal oxime, respectively. The polypeptide is Valine N-monooxygenase 2 (Manihot esculenta (Cassava)).